Here is a 278-residue protein sequence, read N- to C-terminus: C-type lectin domain family 1 member A (278 aa).

The segment at 1-42 is disordered; it reads MLAKYSSTRDMLDADGDTTMSLHSQASATSQRPELGHTEHQR. At 1-52 the chain is on the cytoplasmic side; the sequence is MLAKYSSTRDMLDADGDTTMSLHSQASATSQRPELGHTEHQRPSSAWRPVAL. Residues 18–32 show a composition bias toward polar residues; it reads TTMSLHSQASATSQR. A helical; Signal-anchor for type II membrane protein transmembrane segment spans residues 53 to 73; sequence ILLTLCLVLLIGLAALGLVFF. Residues 74–278 are Extracellular-facing; sequence QFYQLSNTQQ…LHEPLSRRWR (205 aa). 2 N-linked (GlcNAc...) asparagine glycosylation sites follow: asparagine 95 and asparagine 169. Residues 144 to 258 form the C-type lectin domain; sequence HGDKCYQFYK…CRELRRCACE (115 aa). 2 cysteine pairs are disulfide-bonded: cysteine 165–cysteine 257 and cysteine 236–cysteine 249.

It is found in the membrane. The polypeptide is C-type lectin domain family 1 member A (CLEC1A) (Bos taurus (Bovine)).